We begin with the raw amino-acid sequence, 261 residues long: Cytochrome c oxidase subunit 3 (261 aa).

The Mitochondrial matrix segment spans residues 2 to 15 (THQTHAYHMVNPSP). The chain crosses the membrane as a helical span at residues 16–34 (WPLTGALSALLLTSGLVMW). Residues 35–40 (FHYNST) are Mitochondrial intermembrane-facing. Residues 41 to 66 (ILLSLGLLTNILTMYQWWRDIIREGT) traverse the membrane as a helical segment. Residues 67-72 (YQGHHT) lie on the Mitochondrial matrix side of the membrane. Residues 73 to 105 (PIVQKGLRYGMILFIVSEVFFFAGFFWAFYHSS) traverse the membrane as a helical segment. Residues 106-128 (LVPTHDLGGCWPPTGITPLNPLE) are Mitochondrial intermembrane-facing. A helical transmembrane segment spans residues 129-152 (VPLLNTSVLLASGVSITWAHHSLM). At 153–155 (EGN) the chain is on the mitochondrial matrix side. The helical transmembrane segment at 156–183 (RNHMNQALLITILLGLYFTILQASEYFE) threads the bilayer. Residues 184–190 (TSFSISD) lie on the Mitochondrial intermembrane side of the membrane. The helical transmembrane segment at 191-223 (GIYGSTFFMATGFHGLHVIIGSTFLIVCLLRQL) threads the bilayer. Topologically, residues 224-232 (KFHFTSKHH) are mitochondrial matrix. Residues 233 to 256 (FGFEAAAWYWHFVDVVWLFLYVSI) form a helical membrane-spanning segment. Residues 257-261 (YWWGS) are Mitochondrial intermembrane-facing.

This sequence belongs to the cytochrome c oxidase subunit 3 family. As to quaternary structure, component of the cytochrome c oxidase (complex IV, CIV), a multisubunit enzyme composed of 14 subunits. The complex is composed of a catalytic core of 3 subunits MT-CO1, MT-CO2 and MT-CO3, encoded in the mitochondrial DNA, and 11 supernumerary subunits COX4I, COX5A, COX5B, COX6A, COX6B, COX6C, COX7A, COX7B, COX7C, COX8 and NDUFA4, which are encoded in the nuclear genome. The complex exists as a monomer or a dimer and forms supercomplexes (SCs) in the inner mitochondrial membrane with NADH-ubiquinone oxidoreductase (complex I, CI) and ubiquinol-cytochrome c oxidoreductase (cytochrome b-c1 complex, complex III, CIII), resulting in different assemblies (supercomplex SCI(1)III(2)IV(1) and megacomplex MCI(2)III(2)IV(2)).

It is found in the mitochondrion inner membrane. The enzyme catalyses 4 Fe(II)-[cytochrome c] + O2 + 8 H(+)(in) = 4 Fe(III)-[cytochrome c] + 2 H2O + 4 H(+)(out). Component of the cytochrome c oxidase, the last enzyme in the mitochondrial electron transport chain which drives oxidative phosphorylation. The respiratory chain contains 3 multisubunit complexes succinate dehydrogenase (complex II, CII), ubiquinol-cytochrome c oxidoreductase (cytochrome b-c1 complex, complex III, CIII) and cytochrome c oxidase (complex IV, CIV), that cooperate to transfer electrons derived from NADH and succinate to molecular oxygen, creating an electrochemical gradient over the inner membrane that drives transmembrane transport and the ATP synthase. Cytochrome c oxidase is the component of the respiratory chain that catalyzes the reduction of oxygen to water. Electrons originating from reduced cytochrome c in the intermembrane space (IMS) are transferred via the dinuclear copper A center (CU(A)) of subunit 2 and heme A of subunit 1 to the active site in subunit 1, a binuclear center (BNC) formed by heme A3 and copper B (CU(B)). The BNC reduces molecular oxygen to 2 water molecules using 4 electrons from cytochrome c in the IMS and 4 protons from the mitochondrial matrix. This is Cytochrome c oxidase subunit 3 from Rattus norvegicus (Rat).